A 399-amino-acid chain; its full sequence is Chaperone protein DnaJ 1 (399 aa).

Residues 10 to 75 (DYYKVLGVPK…KKRKEYDEAR (66 aa)) enclose the J domain. The CR-type zinc finger occupies 166–244 (GATVPLRMSS…CKGSGRAKSS (79 aa)). Residues Cys-179, Cys-182, Cys-195, Cys-198, Cys-218, Cys-221, Cys-232, and Cys-235 each contribute to the Zn(2+) site. CXXCXGXG motif repeat units follow at residues 179–186 (CKACSGTG), 195–202 (CPTCVGTG), 218–225 (CPDCKGRG), and 232–239 (CEVCKGSG).

Belongs to the DnaJ family. In terms of assembly, homodimer. Zn(2+) is required as a cofactor.

It is found in the cytoplasm. Participates actively in the response to hyperosmotic and heat shock by preventing the aggregation of stress-denatured proteins and by disaggregating proteins, also in an autonomous, DnaK-independent fashion. Unfolded proteins bind initially to DnaJ; upon interaction with the DnaJ-bound protein, DnaK hydrolyzes its bound ATP, resulting in the formation of a stable complex. GrpE releases ADP from DnaK; ATP binding to DnaK triggers the release of the substrate protein, thus completing the reaction cycle. Several rounds of ATP-dependent interactions between DnaJ, DnaK and GrpE are required for fully efficient folding. Also involved, together with DnaK and GrpE, in the DNA replication of plasmids through activation of initiation proteins. The polypeptide is Chaperone protein DnaJ 1 (Streptomyces coelicolor (strain ATCC BAA-471 / A3(2) / M145)).